Reading from the N-terminus, the 143-residue chain is Transcriptional regulator MraZ (143 aa).

SpoVT-AbrB domains follow at residues 5–47 (EYQH…PMHE) and 76–119 (ATEC…SKVI).

The protein belongs to the MraZ family. Forms oligomers.

It is found in the cytoplasm. It localises to the nucleoid. This chain is Transcriptional regulator MraZ, found in Bacillus subtilis (strain 168).